The chain runs to 475 residues: Ribulose bisphosphate carboxylase large chain (475 aa).

The propeptide occupies 1–2 (MS). Position 3 is an N-acetylproline (proline 3). An N6,N6,N6-trimethyllysine modification is found at lysine 14. 2 residues coordinate substrate: asparagine 123 and threonine 173. Lysine 175 functions as the Proton acceptor in the catalytic mechanism. Lysine 177 provides a ligand contact to substrate. The Mg(2+) site is built by lysine 201, aspartate 203, and glutamate 204. Position 201 is an N6-carboxylysine (lysine 201). Catalysis depends on histidine 294, which acts as the Proton acceptor. Substrate-binding residues include arginine 295, histidine 327, and serine 379.

Belongs to the RuBisCO large chain family. Type I subfamily. As to quaternary structure, heterohexadecamer of 8 large chains and 8 small chains; disulfide-linked. The disulfide link is formed within the large subunit homodimers. Mg(2+) serves as cofactor. In terms of processing, the disulfide bond which can form in the large chain dimeric partners within the hexadecamer appears to be associated with oxidative stress and protein turnover.

The protein localises to the plastid. It is found in the chloroplast. The catalysed reaction is 2 (2R)-3-phosphoglycerate + 2 H(+) = D-ribulose 1,5-bisphosphate + CO2 + H2O. The enzyme catalyses D-ribulose 1,5-bisphosphate + O2 = 2-phosphoglycolate + (2R)-3-phosphoglycerate + 2 H(+). Its function is as follows. RuBisCO catalyzes two reactions: the carboxylation of D-ribulose 1,5-bisphosphate, the primary event in carbon dioxide fixation, as well as the oxidative fragmentation of the pentose substrate in the photorespiration process. Both reactions occur simultaneously and in competition at the same active site. In Clarkia xantiana (Gunsight clarkia), this protein is Ribulose bisphosphate carboxylase large chain.